We begin with the raw amino-acid sequence, 147 residues long: Putative protein CLUHP3 (147 aa).

Residues 14 to 47 (KEPEGGRRRLSHPGNMGWMRPSQETTPPDRSHHS) are disordered.

This Homo sapiens (Human) protein is Putative protein CLUHP3 (CLUHP3).